The sequence spans 335 residues: Malate dehydrogenase (335 aa).

Residue 11–17 participates in NAD(+) binding; that stretch reads GAAGQIG. 2 residues coordinate substrate: arginine 94 and arginine 100. Residues asparagine 107, glutamine 114, and 131-133 each bind NAD(+); that span reads VGN. Residues asparagine 133 and arginine 167 each contribute to the substrate site. The Proton acceptor role is filled by histidine 192.

The protein belongs to the LDH/MDH superfamily. MDH type 2 family.

It catalyses the reaction (S)-malate + NAD(+) = oxaloacetate + NADH + H(+). Functionally, catalyzes the reversible oxidation of malate to oxaloacetate. This Bdellovibrio bacteriovorus (strain ATCC 15356 / DSM 50701 / NCIMB 9529 / HD100) protein is Malate dehydrogenase.